Consider the following 273-residue polypeptide: UPF0380 protein YfjQ (273 aa).

Belongs to the UPF0380 family.

This Escherichia coli (strain K12) protein is UPF0380 protein YfjQ (yfjQ).